Reading from the N-terminus, the 576-residue chain is Arginine--tRNA ligase (576 aa).

The 'HIGH' region motif lies at 122-132 (PNVAKQMHVGH).

It belongs to the class-I aminoacyl-tRNA synthetase family. In terms of assembly, monomer.

The protein resides in the cytoplasm. It catalyses the reaction tRNA(Arg) + L-arginine + ATP = L-arginyl-tRNA(Arg) + AMP + diphosphate. This is Arginine--tRNA ligase from Yersinia pseudotuberculosis serotype O:1b (strain IP 31758).